The following is a 389-amino-acid chain: Ecto-ADP-ribosyltransferase 3 (389 aa).

A signal peptide spans 1–26; sequence MKTGHFEIVTMLLATMILVDIFQVKA. Residues cysteine 43 and cysteine 256 are joined by a disulfide bond. The TR mART core domain occupies 64 to 251; that stretch reads QQLDTVWENA…LILQSINKTC (188 aa). NAD(+) is bound by residues tyrosine 101 and arginine 163. Asparagine 248 carries an N-linked (GlcNAc...) asparagine glycan. 3 repeat units span residues 283 to 292, 293 to 302, and 303 to 312. Residues 283-312 form a 3 X 10 AA tandem repeats of [GS]-E-K-N-[QW]-K-L-E-D-H region; that stretch reads GEKNQKLEDHSEKNWKLEDHGEKNQKLEDH. The disordered stretch occupies residues 325-362; sequence MKIPEPFPLPEDKSQGNINNPTPGPVPVPGPKSHPSAS. O-linked (GalNAc...) threonine glycosylation occurs at threonine 346. Residues 346 to 356 show a composition bias toward pro residues; the sequence is TPGPVPVPGPK. A lipid anchor (GPI-anchor amidated serine) is attached at serine 362. Residues 363 to 389 constitute a propeptide, removed in mature form; it reads SGKLLLPQFGMVIILISVSAINLFVAL.

This sequence belongs to the Arg-specific ADP-ribosyltransferase family. O-glycosylated with core 1 or possibly core 8 glycans. As to expression, testis specific.

The protein localises to the cell membrane. The catalysed reaction is L-arginyl-[protein] + NAD(+) = N(omega)-(ADP-D-ribosyl)-L-arginyl-[protein] + nicotinamide + H(+). The sequence is that of Ecto-ADP-ribosyltransferase 3 (ART3) from Homo sapiens (Human).